Reading from the N-terminus, the 51-residue chain is Sperm protamine P1 (51 aa).

It belongs to the protamine P1 family. As to expression, testis.

Its subcellular location is the nucleus. The protein resides in the chromosome. Protamines substitute for histones in the chromatin of sperm during the haploid phase of spermatogenesis. They compact sperm DNA into a highly condensed, stable and inactive complex. The polypeptide is Sperm protamine P1 (PRM1) (Piliocolobus badius (Western red colobus)).